The primary structure comprises 118 residues: Ribonuclease P protein component (118 aa).

It belongs to the RnpA family. As to quaternary structure, consists of a catalytic RNA component (M1 or rnpB) and a protein subunit.

The enzyme catalyses Endonucleolytic cleavage of RNA, removing 5'-extranucleotides from tRNA precursor.. RNaseP catalyzes the removal of the 5'-leader sequence from pre-tRNA to produce the mature 5'-terminus. It can also cleave other RNA substrates such as 4.5S RNA. The protein component plays an auxiliary but essential role in vivo by binding to the 5'-leader sequence and broadening the substrate specificity of the ribozyme. In Enterococcus faecalis (strain ATCC 700802 / V583), this protein is Ribonuclease P protein component.